Consider the following 336-residue polypeptide: MKFLDETKVYIRSGDGGAGAVSFRREKFIEFGGPDGGDGGRGGDVWVEAVNGLNTLIDFRYQQHFKAKTGTHGMGRNRTGAKGADVTLKVPVGTQIFEEDSETLIVDMVAEGQRYRLAAGGNGGFGNAHFKSSTNQAPNWANPGLEGEEKTIWLRLKLIADAGLVGLPNAGKSTFLAACTRARPKIANYPFTTLHPNLGVATVDEKEFIIADIPGLIEGAHEGVGIGDRFLGHVERTRVLLHLVSAQEEDVAKAYKTVKHELEAYGGGLEEKPQIVALSQIDVLDEAELKAKSKALGKACGTPPLLISAVTNKGMTETLRALRSVIDAAKAGEEDA.

The region spanning 1 to 159 is the Obg domain; the sequence is MKFLDETKVY…KTIWLRLKLI (159 aa). An OBG-type G domain is found at 160–327; that stretch reads ADAGLVGLPN…TLRALRSVID (168 aa). GTP-binding positions include 166–173, 191–195, 212–215, 279–282, and 308–310; these read GLPNAGKS, FTTLH, DIPG, SQID, and SAV. Positions 173 and 193 each coordinate Mg(2+).

This sequence belongs to the TRAFAC class OBG-HflX-like GTPase superfamily. OBG GTPase family. In terms of assembly, monomer. It depends on Mg(2+) as a cofactor.

It localises to the cytoplasm. Functionally, an essential GTPase which binds GTP, GDP and possibly (p)ppGpp with moderate affinity, with high nucleotide exchange rates and a fairly low GTP hydrolysis rate. Plays a role in control of the cell cycle, stress response, ribosome biogenesis and in those bacteria that undergo differentiation, in morphogenesis control. This chain is GTPase Obg, found in Sinorhizobium medicae (strain WSM419) (Ensifer medicae).